The primary structure comprises 222 residues: 3-demethoxyubiquinol 3-hydroxylase (222 aa).

Residues Glu-71, Glu-101, His-104, Glu-153, Glu-185, and His-188 each contribute to the Fe cation site.

This sequence belongs to the COQ7 family. It depends on Fe cation as a cofactor.

The protein resides in the cell membrane. The catalysed reaction is a 5-methoxy-2-methyl-3-(all-trans-polyprenyl)benzene-1,4-diol + AH2 + O2 = a 3-demethylubiquinol + A + H2O. The protein operates within cofactor biosynthesis; ubiquinone biosynthesis. In terms of biological role, catalyzes the hydroxylation of 2-nonaprenyl-3-methyl-6-methoxy-1,4-benzoquinol during ubiquinone biosynthesis. This Bordetella pertussis (strain Tohama I / ATCC BAA-589 / NCTC 13251) protein is 3-demethoxyubiquinol 3-hydroxylase.